A 567-amino-acid chain; its full sequence is Urease subunit alpha (567 aa).

The 439-residue stretch at 129–567 (GGIDSHIHFI…LPLAQRYFLF (439 aa)) folds into the Urease domain. The Ni(2+) site is built by histidine 134, histidine 136, and lysine 217. The residue at position 217 (lysine 217) is an N6-carboxylysine. Histidine 219 lines the substrate pocket. Ni(2+) contacts are provided by histidine 246 and histidine 272. The active-site Proton donor is the histidine 320. Aspartate 360 lines the Ni(2+) pocket.

It belongs to the metallo-dependent hydrolases superfamily. Urease alpha subunit family. In terms of assembly, heterotrimer of UreA (gamma), UreB (beta) and UreC (alpha) subunits. Three heterotrimers associate to form the active enzyme. Requires Ni cation as cofactor. Post-translationally, carboxylation allows a single lysine to coordinate two nickel ions.

It is found in the cytoplasm. The catalysed reaction is urea + 2 H2O + H(+) = hydrogencarbonate + 2 NH4(+). The protein operates within nitrogen metabolism; urea degradation; CO(2) and NH(3) from urea (urease route): step 1/1. The polypeptide is Urease subunit alpha (Pseudomonas putida (strain W619)).